A 795-amino-acid polypeptide reads, in one-letter code: RalBP1-associated Eps domain-containing protein 1 (795 aa).

An EH 1 domain is found at 10–113; the sequence is EQKYYSDLFS…SKNEQESRLA (104 aa). The disordered stretch occupies residues 112–238; the sequence is LAASYSSDSE…NWVSFADTPP (127 aa). Positions 115–126 are enriched in polar residues; that stretch reads SYSSDSENQGSY. A phosphoserine mark is found at S145, S162, S166, and S170. A compositionally biased stretch (low complexity) spans 156-168; sequence EQQEPVSPVVSPQ. T173 carries the phosphothreonine modification. Positions 205–216 are enriched in low complexity; that stretch reads GDAQAGSSAGDA. S272 and S273 each carry phosphoserine. In terms of domain architecture, EH 2 spans 285–374; that stretch reads QRQYYVNQFK…ESLMPKLIDL (90 aa). Residue Y288 is modified to Phosphotyrosine. A Phosphoserine modification is found at S307. Residues 318–353 enclose the EF-hand domain; sequence LPILELSHIWELSDFDKDGALTLDEFCAAFHLVVAR. Positions 331, 333, 335, and 342 each coordinate Ca(2+). 2 disordered regions span residues 380–433 and 469–720; these read VGEQ…SSQT and ELKR…DEHT. Polar residues predominate over residues 407–433; that stretch reads LNQTWPELNQSSEQWETFSERSSSSQT. A phosphoserine mark is found at S475, S482, and S489. Composition is skewed to polar residues over residues 497–518 and 525–542; these read INSSVKFPSGNTVDGYSSSDSF and IGSSVTRQRSHSGTSPDN. The residue at position 539 (S539) is a Phosphoserine. Phosphothreonine is present on T543. Residues 543–553 are compositionally biased toward pro residues; it reads TAPPPPPPRPQ. At S561 the chain carries Phosphoserine. Residues 562–573 are compositionally biased toward polar residues; it reads LDMNRTFAVTTG. Low complexity predominate over residues 574–583; the sequence is QQQAGVVAHP. A compositionally biased stretch (pro residues) spans 584-595; the sequence is PAVPPRPQPSQA. Composition is skewed to polar residues over residues 611 to 622 and 681 to 692; these read THTSTSPQQIPE and ATNVPANVSKGT. The interaction with RALBP1 stretch occupies residues 651-795; that stretch reads HPEVLPAEKA…LEQLRPFSHL (145 aa). Residues 707 to 720 are compositionally biased toward basic and acidic residues; that stretch reads KSEDELRPDVDEHT. A phosphoserine mark is found at S708 and S739. Residues 750-790 adopt a coiled-coil conformation; that stretch reads SIRRNKETNTVLARLNSELQQQLKDVLEERISLEVQLEQLR.

As to quaternary structure, homodimer (Potential). Interacts with RALBP1, CRK and GRB2. Binding to RALBP1 does not affect its Ral-binding activity. Forms a complex with the SH3 domains of CRK and GRB2 which may link it to an EGF-responsive tyrosine kinase. Interacts with RAB11FIP2. Interacts with AMPH, ITSN1 (via SH3 domains) and SGIP1; may be involved in clathrin-mediated endocytosis. Post-translationally, EGF stimulates phosphorylation on Tyr-residues. In terms of tissue distribution, expressed in all tissues examined. The highest level expression was found in the kidney and testis.

The protein resides in the membrane. It is found in the clathrin-coated pit. Functionally, may coordinate the cellular actions of activated EGF receptors and Ral-GTPases. The polypeptide is RalBP1-associated Eps domain-containing protein 1 (Reps1) (Mus musculus (Mouse)).